The following is a 224-amino-acid chain: ATP synthase subunit a (224 aa).

6 helical membrane-spanning segments follow: residues Leu17–Leu37, Ile72–Ile92, Leu99–Ile119, Met125–Ile145, Leu170–Leu190, and Ile195–Leu215.

Belongs to the ATPase A chain family. In terms of assembly, F-type ATPases have 2 components, CF(1) - the catalytic core - and CF(0) - the membrane proton channel. CF(1) has five subunits: alpha(3), beta(3), gamma(1), delta(1), epsilon(1). CF(0) has three main subunits: a, b and c.

The protein resides in the mitochondrion inner membrane. Mitochondrial membrane ATP synthase (F(1)F(0) ATP synthase or Complex V) produces ATP from ADP in the presence of a proton gradient across the membrane which is generated by electron transport complexes of the respiratory chain. F-type ATPases consist of two structural domains, F(1) - containing the extramembraneous catalytic core and F(0) - containing the membrane proton channel, linked together by a central stalk and a peripheral stalk. During catalysis, ATP synthesis in the catalytic domain of F(1) is coupled via a rotary mechanism of the central stalk subunits to proton translocation. Key component of the proton channel; it may play a direct role in the translocation of protons across the membrane. This Drosophila mauritiana (Fruit fly) protein is ATP synthase subunit a (mt:ATPase6).